We begin with the raw amino-acid sequence, 398 residues long: MAKEKYDRSKPHVNIGTIGHVDHGKTTLTAAITTVLARRLPSSVNQPKDYASIDAAPEERERGITINTAHVEYETEKRHYAHIDAPGHADYVKNMITGAAQMDGAILVVASTDGPMPQTREHILLSRQVGVKHLIVFMNKVDLVDDEELLELVEMEIRDLLSEYDFPGDDLPVIQGSALKALEGDSKYEDIVMELMNTVDEYIPEPERDTDKPLLLPVEDVFSITGRGTVASGRIDRGIVKVNDEIEIVGIKEETQKAVVTGVEMFRKQLDEGLAGDNVGVLLRGVQRDEIERGQVIAKPGSINPHTKFKGEVYILTKEEGGRHTPFFNNYRPQFYFRTTDVTGSIELPAGTEMVMPGDNVTIDVELIHPIAVEQGTTFSIREGGRTVGSGMVTEIEA.

A tr-type G domain is found at 10 to 207; that stretch reads KPHVNIGTIG…TVDEYIPEPE (198 aa). Positions 19 to 26 are G1; it reads GHVDHGKT. A GTP-binding site is contributed by 19–26; sequence GHVDHGKT. Residue threonine 26 coordinates Mg(2+). A G2 region spans residues 63-67; it reads GITIN. The G3 stretch occupies residues 84–87; it reads DAPG. GTP is bound by residues 84-88 and 139-142; these read DAPGH and NKVD. The tract at residues 139–142 is G4; sequence NKVD. Positions 177 to 179 are G5; sequence SAL.

Belongs to the TRAFAC class translation factor GTPase superfamily. Classic translation factor GTPase family. EF-Tu/EF-1A subfamily. Monomer.

The protein localises to the cytoplasm. It catalyses the reaction GTP + H2O = GDP + phosphate + H(+). GTP hydrolase that promotes the GTP-dependent binding of aminoacyl-tRNA to the A-site of ribosomes during protein biosynthesis. This chain is Elongation factor Tu, found in Streptococcus pneumoniae serotype 4 (strain ATCC BAA-334 / TIGR4).